Consider the following 399-residue polypeptide: Galactokinase (399 aa).

Position 42 to 45 (Glu-42 to Asp-45) interacts with substrate. ATP-binding positions include Ser-76 and Ala-133–Ser-139. 2 residues coordinate Mg(2+): Ser-139 and Glu-171. Residue Asp-183 is the Proton acceptor of the active site. Tyr-233 is a substrate binding site.

It belongs to the GHMP kinase family. GalK subfamily.

The protein localises to the cytoplasm. The catalysed reaction is alpha-D-galactose + ATP = alpha-D-galactose 1-phosphate + ADP + H(+). It functions in the pathway carbohydrate metabolism; galactose metabolism. Catalyzes the transfer of the gamma-phosphate of ATP to D-galactose to form alpha-D-galactose-1-phosphate (Gal-1-P). In Lactococcus lactis subsp. cremoris (strain MG1363), this protein is Galactokinase.